The primary structure comprises 133 residues: Single-stranded DNA-binding protein 2 (133 aa).

The SSB domain occupies 1–103 (MNKTILIGRL…VVAEEVKFLE (103 aa)).

In terms of assembly, homotetramer.

The polypeptide is Single-stranded DNA-binding protein 2 (ssb2) (Clostridium acetobutylicum (strain ATCC 824 / DSM 792 / JCM 1419 / IAM 19013 / LMG 5710 / NBRC 13948 / NRRL B-527 / VKM B-1787 / 2291 / W)).